Reading from the N-terminus, the 366-residue chain is Sigma54-dependent transcriptional activator SfnR (366 aa).

The region spanning 21 to 250 (QVFEDPRSQA…LENVIHHSLL (230 aa)) is the Sigma-54 factor interaction domain. Residues 49–56 (GETGTGKE) and 112–121 (ANGGTLFLDE) each bind ATP.

Its function is as follows. Involved in the dimethyl sulfide degradation pathway. Activates the expression of sfnG and sfnF. This chain is Sigma54-dependent transcriptional activator SfnR, found in Pseudomonas putida (Arthrobacter siderocapsulatus).